We begin with the raw amino-acid sequence, 273 residues long: Undecaprenyl-diphosphatase (273 aa).

Helical transmembrane passes span 46–63 (LFEV…CWEY), 83–103 (FVLN…LAGK), 109–129 (LFNS…ILWV), 184–204 (ATEF…AYDL), 218–238 (AFGI…RGLL), and 249–269 (FAWY…YGLV).

It belongs to the UppP family.

It localises to the cell inner membrane. It catalyses the reaction di-trans,octa-cis-undecaprenyl diphosphate + H2O = di-trans,octa-cis-undecaprenyl phosphate + phosphate + H(+). Its function is as follows. Catalyzes the dephosphorylation of undecaprenyl diphosphate (UPP). Confers resistance to bacitracin. The protein is Undecaprenyl-diphosphatase of Methylococcus capsulatus (strain ATCC 33009 / NCIMB 11132 / Bath).